The sequence spans 117 residues: Hainantoxin-XV-5 (117 aa).

The N-terminal stretch at 1–20 (MKLCAVIIASLLVCVAVASS) is a signal peptide. Positions 20–55 (SSDNQKEFAQEKEMTREETQSLGEHEKDDEVTGSEE) are disordered. Residues 21–56 (SDNQKEFAQEKEMTREETQSLGEHEKDDEVTGSEER) constitute a propeptide that is removed on maturation. Residues 23–55 (NQKEFAQEKEMTREETQSLGEHEKDDEVTGSEE) show a composition bias toward basic and acidic residues. 4 disulfides stabilise this stretch: cysteine 58–cysteine 72, cysteine 65–cysteine 78, cysteine 69–cysteine 115, and cysteine 71–cysteine 91.

It belongs to the neurotoxin 03 (Tx2) family. 02 subfamily. HNTX-XV sub-subfamily. In terms of tissue distribution, expressed by the venom gland.

Its subcellular location is the secreted. Its function is as follows. Putative ion channel inhibitor. The protein is Hainantoxin-XV-5 of Cyriopagopus hainanus (Chinese bird spider).